Here is a 247-residue protein sequence, read N- to C-terminus: 1-(5-phosphoribosyl)-5-[(5-phosphoribosylamino)methylideneamino] imidazole-4-carboxamide isomerase (247 aa).

Catalysis depends on D8, which acts as the Proton acceptor. Catalysis depends on D129, which acts as the Proton donor.

This sequence belongs to the HisA/HisF family.

The protein resides in the cytoplasm. It carries out the reaction 1-(5-phospho-beta-D-ribosyl)-5-[(5-phospho-beta-D-ribosylamino)methylideneamino]imidazole-4-carboxamide = 5-[(5-phospho-1-deoxy-D-ribulos-1-ylimino)methylamino]-1-(5-phospho-beta-D-ribosyl)imidazole-4-carboxamide. The protein operates within amino-acid biosynthesis; L-histidine biosynthesis; L-histidine from 5-phospho-alpha-D-ribose 1-diphosphate: step 4/9. The sequence is that of 1-(5-phosphoribosyl)-5-[(5-phosphoribosylamino)methylideneamino] imidazole-4-carboxamide isomerase from Bradyrhizobium sp. (strain BTAi1 / ATCC BAA-1182).